The sequence spans 685 residues: Transforming growth factor beta activator LRRC33 (685 aa).

Positions 1-27 are cleaved as a signal peptide; that stretch reads MPVCGCLSVVLSHAVVLLMLVLHSASG. The Extracellular portion of the chain corresponds to 28-640; the sequence is HPQTFPCRLI…CGFTNNNKES (613 aa). In terms of domain architecture, LRRNT spans 29 to 56; it reads PQTFPCRLIQRVALCSGRQLSVIPDCLP. LRR repeat units lie at residues 57–79, 80–102, 103–129, 130–154, 155–178, 180–201, and 202–225; these read HETE…LSRY, PFLR…AFIE, SHLL…AFRS, LTQL…LVAN, LSSL…TFRD, HQLK…AFDH, and MKKL…EMTQ. Asn154 is a glycosylation site (N-linked (GlcNAc...) asparagine). N-linked (GlcNAc...) asparagine glycosylation is found at Asn230 and Asn244. LRR repeat units lie at residues 248–271 and 273–296; these read TFQL…PTNN and IRTL…TSSN. N-linked (GlcNAc...) asparagine glycans are attached at residues Asn291, Asn296, Asn309, Asn312, and Asn325. LRR repeat units lie at residues 326-349, 351-373, 374-397, 400-423, 425-447, 457-480, 482-503, 505-526, 527-549, 551-571, and 573-596; these read LSSV…FIKQ, PQLY…SEDL, PVTI…QTSK, LNNL…IFTS, PNLN…NYMG, MASL…AFKG, SLTH…SLKG, ANTL…FSPY, TNLK…LMAL, LKLL…HASL, and AKKL…WFRT. N-linked (GlcNAc...) asparagine glycosylation is found at Asn402 and Asn407. Asn533 carries an N-linked (GlcNAc...) asparagine glycan. Residues 597–635 enclose the LRRCT domain; sequence FGENKGIHVADLSEITCLDLNYRRHKVVLTDAVYCGFTN. The helical transmembrane segment at 641–661 threads the bilayer; sequence VVWYILLFVTVSVSIMGISVI. At 662–685 the chain is on the cytoplasmic side; it reads YMLTFKPRMLPRVIKKKCWRPTSY.

This sequence belongs to the LRRC32/LRRC33 family.

The protein resides in the cell membrane. The protein localises to the endoplasmic reticulum membrane. Functionally, key regulator of transforming growth factor beta-1 (TGFB1) specifically required for microglia function in the nervous system. Required for activation of latent TGF-beta-1 in macrophages and microglia: associates specifically via disulfide bonds with the Latency-associated peptide (LAP), which is the regulatory chain of TGFB1, and regulates integrin-dependent activation of TGF-beta-1. TGF-beta-1 activation mediated by lrrc33/nrros is highly localized: there is little spreading of TGF-beta-1 activated from one microglial cell to neighboring microglia, suggesting the existence of localized and selective activation of TGF-beta-1 by lrrc33/nrros. The sequence is that of Transforming growth factor beta activator LRRC33 from Danio rerio (Zebrafish).